The primary structure comprises 277 residues: NH(3)-dependent NAD(+) synthetase (277 aa).

36-43 (GLSGGIDS) provides a ligand contact to ATP. D42 lines the Mg(2+) pocket. R118 contributes to the deamido-NAD(+) binding site. T138 is an ATP binding site. E143 serves as a coordination point for Mg(2+). 2 residues coordinate ATP: K167 and S189.

It belongs to the NAD synthetase family. Homodimer.

It catalyses the reaction deamido-NAD(+) + NH4(+) + ATP = AMP + diphosphate + NAD(+) + H(+). Its pathway is cofactor biosynthesis; NAD(+) biosynthesis; NAD(+) from deamido-NAD(+) (ammonia route): step 1/1. Catalyzes the ATP-dependent amidation of deamido-NAD to form NAD. Uses ammonia as a nitrogen source. This is NH(3)-dependent NAD(+) synthetase from Chlorobium phaeobacteroides (strain BS1).